The chain runs to 409 residues: Elongation factor Tu, chloroplastic (409 aa).

Residues 10–214 (KPHVNIGTIG…AVDEYIPTPE (205 aa)) form the tr-type G domain. Residues 19–26 (GHVDHGKT) form a G1 region. 19 to 26 (GHVDHGKT) contributes to the GTP binding site. Threonine 26 provides a ligand contact to Mg(2+). The interval 60-64 (GITIN) is G2. Residues 81–84 (DCPG) are G3. Residues 81 to 85 (DCPGH) and 136 to 139 (NKED) each bind GTP. The interval 136 to 139 (NKED) is G4. The G5 stretch occupies residues 174 to 176 (SAL).

Belongs to the TRAFAC class translation factor GTPase superfamily. Classic translation factor GTPase family. EF-Tu/EF-1A subfamily.

It is found in the plastid. It localises to the chloroplast. The catalysed reaction is GTP + H2O = GDP + phosphate + H(+). Functionally, GTP hydrolase that promotes the GTP-dependent binding of aminoacyl-tRNA to the A-site of ribosomes during protein biosynthesis. This chain is Elongation factor Tu, chloroplastic (tufA), found in Phaeodactylum tricornutum (strain CCAP 1055/1).